Consider the following 491-residue polypeptide: MQVIETLAQGLKRELKVVIPADEMEARMNERLVEVKDRVRINGFRPGKVPVAHLKKVYGKSIMADLVNEIVREKPTEILTSRGEKSATQPEIGMTEDEAEADKILKAEADFEFTVAYEIIPPIELKDASGIKVTREVVDVGEDEVNEQIERIAESARTYESKKGKAANGDRVTIDYLGKVDGEAFDGGKDEDAELVLGSNRFIPGFEEQLVGAKAGDEKTITVTFPADYPAANLAGKEATFDVTVKDVAAAAPIEINDELATKLGLESVDKLKEIVRGQIESQFGSITRQKVKRQLLDQLDELYQFDTPERLVDAEFENIWRQINTDLQQAGKTFADEDTTEEEARAEYRKLAQRRVRLGLVLSEIGEKAGVQVSDDEMQNSLFQQLRQFPGQEKEIIEYFRNTPGAAASLRAPLFEEKVVDHLLTEVSVTDKKVSKEELTAEDDADEKPAKKTASKKKAAAKADAAEGEEAAAPKRKAPAKKKASDESAE.

Residues 169–254 form the PPIase FKBP-type domain; that stretch reads GDRVTIDYLG…VKDVAAAAPI (86 aa). The interval 434–491 is disordered; the sequence is KVSKEELTAEDDADEKPAKKTASKKKAAAKADAAEGEEAAAPKRKAPAKKKASDESAE. Basic residues predominate over residues 452-461; sequence KKTASKKKAA.

This sequence belongs to the FKBP-type PPIase family. Tig subfamily.

It localises to the cytoplasm. It carries out the reaction [protein]-peptidylproline (omega=180) = [protein]-peptidylproline (omega=0). In terms of biological role, involved in protein export. Acts as a chaperone by maintaining the newly synthesized protein in an open conformation. Functions as a peptidyl-prolyl cis-trans isomerase. This chain is Trigger factor, found in Sinorhizobium medicae (strain WSM419) (Ensifer medicae).